We begin with the raw amino-acid sequence, 212 residues long: 2-phospho-L-lactate guanylyltransferase (212 aa).

Belongs to the CofC family. As to quaternary structure, homodimer.

The catalysed reaction is (2S)-2-phospholactate + GTP + H(+) = (2S)-lactyl-2-diphospho-5'-guanosine + diphosphate. It functions in the pathway cofactor biosynthesis; coenzyme F420 biosynthesis. Functionally, guanylyltransferase that catalyzes the activation of (2S)-2-phospholactate (2-PL) as (2S)-lactyl-2-diphospho-5'-guanosine, via the condensation of 2-PL with GTP. It is involved in the biosynthesis of coenzyme F420, a hydride carrier cofactor. The polypeptide is 2-phospho-L-lactate guanylyltransferase (Methanocorpusculum labreanum (strain ATCC 43576 / DSM 4855 / Z)).